Here is a 500-residue protein sequence, read N- to C-terminus: Cytochrome P450 11B2, mitochondrial (500 aa).

Residues 1–24 (MALRVTADVWLARPWQCLHRTRAL) constitute a mitochondrion transit peptide. Position 381 (F381) interacts with 21-hydroxyprogesterone. Position 447 (C447) interacts with heme.

Belongs to the cytochrome P450 family. It depends on heme as a cofactor.

The protein resides in the mitochondrion inner membrane. The catalysed reaction is a steroid + 2 reduced [adrenodoxin] + O2 + 2 H(+) = an 11beta-hydroxysteroid + 2 oxidized [adrenodoxin] + H2O. The enzyme catalyses 21-hydroxyprogesterone + 2 reduced [adrenodoxin] + O2 + 2 H(+) = corticosterone + 2 oxidized [adrenodoxin] + H2O. It catalyses the reaction corticosterone + 2 reduced [adrenodoxin] + O2 + 2 H(+) = 18-hydroxycorticosterone + 2 oxidized [adrenodoxin] + H2O. It carries out the reaction 18-hydroxycorticosterone + 2 reduced [adrenodoxin] + O2 + 2 H(+) = aldosterone + 2 oxidized [adrenodoxin] + 2 H2O. The catalysed reaction is 11-deoxycortisol + 2 reduced [adrenodoxin] + O2 + 2 H(+) = cortisol + 2 oxidized [adrenodoxin] + H2O. The enzyme catalyses 21-hydroxyprogesterone + 2 reduced [adrenodoxin] + O2 + 2 H(+) = 18-hydroxy-11-deoxycorticosterone + 2 oxidized [adrenodoxin] + H2O. It catalyses the reaction cortisol + 2 reduced [adrenodoxin] + O2 + 2 H(+) = 18-hydroxycortisol + 2 oxidized [adrenodoxin] + H2O. It carries out the reaction 18-hydroxycortisol + 2 reduced [adrenodoxin] + O2 + 2 H(+) = 18-oxocortisol + 2 oxidized [adrenodoxin] + 2 H2O. The protein operates within steroid biosynthesis. A cytochrome P450 monooxygenase that catalyzes the biosynthesis of aldosterone, the main mineralocorticoid in the human body responsible for salt and water homeostasis, thus involved in blood pressure regulation, arterial hypertension, and the development of heart failure. Catalyzes three sequential oxidative reactions of 11-deoxycorticosterone (21-hydroxyprogesterone), namely 11-beta hydroxylation, followed by two successive oxidations at C18 yielding 18-hydroxy and then 18-oxo intermediates (that would not leave the enzyme active site during the consecutive hydroxylation reactions), ending with the formation of aldosterone. Can also produce 18-hydroxycortisol and 18-oxocortisol, derived from successive oxidations of cortisol at C18, normally found at very low levels, but significantly increased in primary aldosteronism, the most common form of secondary hypertension. Mechanistically, uses molecular oxygen inserting one oxygen atom into a substrate and reducing the second into a water molecule. Two electrons are provided by NADPH via a two-protein mitochondrial transfer system comprising flavoprotein FDXR (adrenodoxin/ferredoxin reductase) and nonheme iron-sulfur protein FDX1 or FDX2 (adrenodoxin/ferredoxin). Could also be involved in the androgen metabolic pathway. This Mus musculus (Mouse) protein is Cytochrome P450 11B2, mitochondrial (Cyp11b2).